We begin with the raw amino-acid sequence, 428 residues long: Enolase (428 aa).

Gln-163 contacts (2R)-2-phosphoglycerate. The active-site Proton donor is Glu-205. Mg(2+) is bound by residues Asp-242, Glu-286, and Asp-313. The (2R)-2-phosphoglycerate site is built by Lys-338, Arg-367, Ser-368, and Lys-389. The active-site Proton acceptor is Lys-338.

This sequence belongs to the enolase family. Requires Mg(2+) as cofactor.

The protein resides in the cytoplasm. It localises to the secreted. The protein localises to the cell surface. The enzyme catalyses (2R)-2-phosphoglycerate = phosphoenolpyruvate + H2O. It participates in carbohydrate degradation; glycolysis; pyruvate from D-glyceraldehyde 3-phosphate: step 4/5. Catalyzes the reversible conversion of 2-phosphoglycerate (2-PG) into phosphoenolpyruvate (PEP). It is essential for the degradation of carbohydrates via glycolysis. The chain is Enolase from Bordetella petrii (strain ATCC BAA-461 / DSM 12804 / CCUG 43448).